A 247-amino-acid polypeptide reads, in one-letter code: C-type lectin domain family 7 member A (247 aa).

Topologically, residues 1–44 are cytoplasmic; that stretch reads MEYHPDLENLDEDGYTQLHFDSRSNTRIAVVSEKGSCVASPPWR. The ITAM-like motif lies at 15-18; sequence YTQL. A helical; Signal-anchor for type II membrane protein membrane pass occupies residues 45–65; the sequence is LIAVILGILCLVILVIAVVLG. The Extracellular segment spans residues 66–247; that stretch reads TMAIWRPNSG…CSICEKKFSM (182 aa). The disordered stretch occupies residues 81 to 105; it reads NGYFPSRNKENHSQPTQSPLEESVT. Residue asparagine 91 is glycosylated (N-linked (GlcNAc...) asparagine). Residues 93 to 105 show a composition bias toward polar residues; the sequence is SQPTQSPLEESVT. 3 disulfides stabilise this stretch: cysteine 120-cysteine 131, cysteine 148-cysteine 241, and cysteine 220-cysteine 233. The C-type lectin domain maps to 127–242; that stretch reads YEKSCYLFSP…CSVPSCSICE (116 aa). (1,3-beta-D-glucosyl)n is bound at residue 146–153; that stretch reads RQCSQLGS. A divalent metal cation-binding residues include lysine 157, aspartate 159, and glutamate 163. Glutamate 195 provides a ligand contact to (1,3-beta-D-glucosyl)n. Position 242 (glutamate 242) interacts with a divalent metal cation.

Homodimer. Interacts with SYK; participates in leukocyte activation in presence of fungal pathogens. Interacts with CD37; this interaction controls CLEC7A-mediated IL-6 production. In terms of processing, phosphorylated on tyrosine residues in response to beta-glucan binding. In terms of tissue distribution, detected in dendritic cells, in paracortical and medullary regions of lymph nodes, and in spleen red pulp and white pulp.

It localises to the cell membrane. Its function is as follows. Lectin that functions as a pattern recognizing receptor (PRR) specific for beta-1,3-linked and beta-1,6-linked glucans, which constitute cell wall constituents from pathogenic bacteria and fungi. Necessary for the TLR2-mediated inflammatory response and activation of NF-kappa-B: upon beta-glucan binding, recruits SYK via its ITAM motif and promotes a signaling cascade that activates some CARD domain-BCL10-MALT1 (CBM) signalosomes, leading to the activation of NF-kappa-B and MAP kinase p38 (MAPK11, MAPK12, MAPK13 and/or MAPK14) pathways which stimulate expression of genes encoding pro-inflammatory cytokines and chemokines. Enhances cytokine production in macrophages and dendritic cells. Mediates production of reactive oxygen species in the cell. Mediates phagocytosis of C.albicans conidia. Binds T-cells in a way that does not involve their surface glycans and plays a role in T-cell activation. Stimulates T-cell proliferation. Induces phosphorylation of SCIMP after binding beta-glucans. The chain is C-type lectin domain family 7 member A (CLEC7A) from Macaca mulatta (Rhesus macaque).